The sequence spans 1028 residues: Formin-like protein 3 (1028 aa).

G2 carries the N-myristoyl glycine lipid modification. Residues 26–472 (MPMPEPCELE…EAFQRRCHLE (447 aa)) enclose the GBD/FH3 domain. Phosphothreonine is present on T95. Position 174 is a phosphoserine (S174). Positions 493–541 (ELSEGMPPSDLDLLAPAPPPEEVLPLPPPPAPPLPPPPPPLPDKCPPAP) are disordered. Residues 508 to 541 (PAPPPEEVLPLPPPPAPPLPPPPPPLPDKCPPAP) show a composition bias toward pro residues. In terms of domain architecture, FH2 spans 561-951 (IKKPIKTKFR…MREKQLAQEA (391 aa)). Positions 986-1018 (YEGKDGTIEDIITVLKSVPFTARTAKRGSRFFC) constitute a DAD domain. Phosphoserine is present on S1014.

It belongs to the formin homology family. Interacts with SRGAP2 (via SH3 domain). As to expression, expressed in endothelial cells.

The protein resides in the cytoplasm. It is found in the cell membrane. Its function is as follows. Plays a role in the regulation of cell morphology and cytoskeletal organization. Required in the control of cell shape and migration. Required for developmental angiogenesis. In this process, required for microtubule reorganization and for efficient endothelial cell elongation. In quiescent endothelial cells, triggers rearrangement of the actin cytoskeleton, but does not alter microtubule alignement. The sequence is that of Formin-like protein 3 (FMNL3) from Homo sapiens (Human).